A 531-amino-acid chain; its full sequence is Arginine--tRNA ligase (531 aa).

The 'HIGH' region signature appears at 113-123; it reads ANPTGPLHIGH.

It belongs to the class-I aminoacyl-tRNA synthetase family. In terms of assembly, monomer.

It is found in the cytoplasm. It catalyses the reaction tRNA(Arg) + L-arginine + ATP = L-arginyl-tRNA(Arg) + AMP + diphosphate. This is Arginine--tRNA ligase from Campylobacter lari (strain RM2100 / D67 / ATCC BAA-1060).